A 438-amino-acid polypeptide reads, in one-letter code: Argininosuccinate lyase (438 aa).

It belongs to the lyase 1 family. Argininosuccinate lyase subfamily.

The protein resides in the cytoplasm. It carries out the reaction 2-(N(omega)-L-arginino)succinate = fumarate + L-arginine. The protein operates within amino-acid biosynthesis; L-arginine biosynthesis; L-arginine from L-ornithine and carbamoyl phosphate: step 3/3. This Clostridioides difficile (strain 630) (Peptoclostridium difficile) protein is Argininosuccinate lyase.